Reading from the N-terminus, the 323-residue chain is Phosphate acetyltransferase (323 aa).

This sequence belongs to the phosphate acetyltransferase and butyryltransferase family.

It is found in the cytoplasm. It carries out the reaction acetyl-CoA + phosphate = acetyl phosphate + CoA. It participates in metabolic intermediate biosynthesis; acetyl-CoA biosynthesis; acetyl-CoA from acetate: step 2/2. In Bacillus subtilis (strain 168), this protein is Phosphate acetyltransferase (pta).